Reading from the N-terminus, the 84-residue chain is Exodeoxyribonuclease 7 small subunit (84 aa).

The disordered stretch occupies residues 65-84; that stretch reads QEGDWTTSPFEPASGEPPGG.

This sequence belongs to the XseB family. Heterooligomer composed of large and small subunits.

The protein resides in the cytoplasm. It catalyses the reaction Exonucleolytic cleavage in either 5'- to 3'- or 3'- to 5'-direction to yield nucleoside 5'-phosphates.. Its function is as follows. Bidirectionally degrades single-stranded DNA into large acid-insoluble oligonucleotides, which are then degraded further into small acid-soluble oligonucleotides. The polypeptide is Exodeoxyribonuclease 7 small subunit (Syntrophobacter fumaroxidans (strain DSM 10017 / MPOB)).